The chain runs to 355 residues: MKIAVLPGDGIGPEIVNEAVKVLNALDEKFELEQAPVGGAGYEASGHPLPDATLALAKEADAILFGAVGDWKYDSLERALRPEQAILGLRKHLELFANFRPAICYPQLVDASPLKPELVAGLDILIVRELNGDIYFGQPRGVRAAPDGPFAGAREGFDTMRYSEPEVRRIAHVAFQAARKRAKKLLSVDKSNVLETSQFWRDVMIDVSKEYADVELSHMYVDNAAMQLAKAPKQFDVIVTGNMFGDILSDEASMLTGSIGMLPSASLDQRNKGLYEPSHGSAPDIAGKGIANPLATILSAAMLLRYSLNRAEQADRIERAVKAVLEQGYRTGDIATPGCKQVGTAAMGDAVVAAL.

Substrate is bound by residues R90, R100, R128, and D222. 3 residues coordinate Mg(2+): D222, D246, and D250. G280 to N292 is an NAD(+) binding site.

This sequence belongs to the isocitrate and isopropylmalate dehydrogenases family. LeuB type 1 subfamily. In terms of assembly, homodimer. Mg(2+) serves as cofactor. The cofactor is Mn(2+).

Its subcellular location is the cytoplasm. It catalyses the reaction (2R,3S)-3-isopropylmalate + NAD(+) = 4-methyl-2-oxopentanoate + CO2 + NADH. It functions in the pathway amino-acid biosynthesis; L-leucine biosynthesis; L-leucine from 3-methyl-2-oxobutanoate: step 3/4. In terms of biological role, catalyzes the oxidation of 3-carboxy-2-hydroxy-4-methylpentanoate (3-isopropylmalate) to 3-carboxy-4-methyl-2-oxopentanoate. The product decarboxylates to 4-methyl-2 oxopentanoate. The sequence is that of 3-isopropylmalate dehydrogenase from Burkholderia mallei (strain ATCC 23344).